A 475-amino-acid polypeptide reads, in one-letter code: Aspartyl/glutamyl-tRNA(Asn/Gln) amidotransferase subunit B (475 aa).

It belongs to the GatB/GatE family. GatB subfamily. Heterotrimer of A, B and C subunits.

The catalysed reaction is L-glutamyl-tRNA(Gln) + L-glutamine + ATP + H2O = L-glutaminyl-tRNA(Gln) + L-glutamate + ADP + phosphate + H(+). The enzyme catalyses L-aspartyl-tRNA(Asn) + L-glutamine + ATP + H2O = L-asparaginyl-tRNA(Asn) + L-glutamate + ADP + phosphate + 2 H(+). Its function is as follows. Allows the formation of correctly charged Asn-tRNA(Asn) or Gln-tRNA(Gln) through the transamidation of misacylated Asp-tRNA(Asn) or Glu-tRNA(Gln) in organisms which lack either or both of asparaginyl-tRNA or glutaminyl-tRNA synthetases. The reaction takes place in the presence of glutamine and ATP through an activated phospho-Asp-tRNA(Asn) or phospho-Glu-tRNA(Gln). This is Aspartyl/glutamyl-tRNA(Asn/Gln) amidotransferase subunit B from Bacillus cereus (strain ATCC 10987 / NRS 248).